A 430-amino-acid chain; its full sequence is Trigger factor (430 aa).

The PPIase FKBP-type domain maps to 157–242 (GDLVALETWS…AVEVSEPVLP (86 aa)).

This sequence belongs to the FKBP-type PPIase family. Tig subfamily.

Its subcellular location is the cytoplasm. The catalysed reaction is [protein]-peptidylproline (omega=180) = [protein]-peptidylproline (omega=0). Functionally, involved in protein export. Acts as a chaperone by maintaining the newly synthesized protein in an open conformation. Functions as a peptidyl-prolyl cis-trans isomerase. This Xanthomonas euvesicatoria pv. vesicatoria (strain 85-10) (Xanthomonas campestris pv. vesicatoria) protein is Trigger factor.